Here is a 1019-residue protein sequence, read N- to C-terminus: Probable inorganic carbon transporter subunit DabA 1 (1019 aa).

Zn(2+)-binding residues include cysteine 491 and aspartate 493. Residues 624–643 are disordered; that stretch reads VPTRLHSPRDEGSAAGGEGQ. Zn(2+)-binding residues include histidine 676 and cysteine 691.

Belongs to the inorganic carbon transporter (TC 9.A.2) DabA family. In terms of assembly, forms a complex with DabB. It depends on Zn(2+) as a cofactor.

It is found in the cell inner membrane. Functionally, part of an energy-coupled inorganic carbon pump. This chain is Probable inorganic carbon transporter subunit DabA 1, found in Sorangium cellulosum (strain So ce56) (Polyangium cellulosum (strain So ce56)).